Reading from the N-terminus, the 461-residue chain is Probable ornithine decarboxylase (461 aa).

A disordered region spans residues 1-35 (MTGTKRNGEEVVNENNNNNVAEETNKKAKVDESST). Over residues 13–22 (NENNNNNVAE) the composition is skewed to low complexity. Over residues 23–32 (ETNKKAKVDE) the composition is skewed to basic and acidic residues. The residue at position 116 (lysine 116) is an N6-(pyridoxal phosphate)lysine. Pyridoxal 5'-phosphate is bound by residues serine 247, glycine 284, and 317–320 (EPGR). 375–376 (FD) provides a ligand contact to substrate. Catalysis depends on cysteine 402, which acts as the Proton donor; shared with dimeric partner. Position 403 (aspartate 403) interacts with substrate. Tyrosine 431 contributes to the pyridoxal 5'-phosphate binding site.

This sequence belongs to the Orn/Lys/Arg decarboxylase class-II family. In terms of assembly, homodimer. Only the dimer is catalytically active, as the active sites are constructed of residues from both monomers. It depends on pyridoxal 5'-phosphate as a cofactor.

The catalysed reaction is L-ornithine + H(+) = putrescine + CO2. The protein operates within amine and polyamine biosynthesis; putrescine biosynthesis via L-ornithine pathway; putrescine from L-ornithine: step 1/1. Inhibited by antizyme (AZ) in response to polyamine levels. AZ inhibits the assembly of the functional homodimer by binding to ODC monomers and targeting them for ubiquitin-independent proteolytic destruction by the 26S proteasome. Catalyzes the first and rate-limiting step of polyamine biosynthesis that converts ornithine into putrescine, which is the precursor for the polyamines, spermidine and spermine. Polyamines are essential for cell proliferation and are implicated in cellular processes, ranging from DNA replication to apoptosis. The polypeptide is Probable ornithine decarboxylase (odc) (Dictyostelium discoideum (Social amoeba)).